The following is a 352-amino-acid chain: C-C chemokine receptor type 5 (352 aa).

The Extracellular segment spans residues 1-30 (MDYQVSSPTYDIDYYTSEPCQKINVKQIAA). Y3 carries the sulfotyrosine modification. Residues S6 and S7 are each glycosylated (O-linked (GalNAc...) serine). Sulfotyrosine occurs at positions 10, 14, and 15. Disulfide bonds link C20–C269 and C101–C178. Residues 31–58 (RLLPPLYSLVFIFGFVGNMLVILILINC) form a helical membrane-spanning segment. Residues 59–68 (KRLKSMTDIY) are Cytoplasmic-facing. Residues 69–89 (LLNLAISDLFFLLTVPFWAHY) form a helical membrane-spanning segment. Residues 90 to 102 (AAAQWDFGNTMCQ) lie on the Extracellular side of the membrane. Residues 103-124 (LLTGLYFIGFFSGIFFIILLTI) form a helical membrane-spanning segment. The Cytoplasmic segment spans residues 125 to 141 (DRYLAIVHAVFALKART). Residues 142 to 166 (VTFGVVTSVITWVVAVFASLPGIIF) form a helical membrane-spanning segment. Residues 167-198 (TRSQKEGLHYTCSSHFPYSQYQFWKNFQTLKI) lie on the Extracellular side of the membrane. The chain crosses the membrane as a helical span at residues 199–218 (VILGLVLPLLVMVICYSGIL). Topologically, residues 219-235 (KTLLRCRNEKKRHRAVR) are cytoplasmic. Residues 236–260 (LIFTIMIVYFLFWAPYNIVLLLNTF) traverse the membrane as a helical segment. The Extracellular segment spans residues 261–277 (QEFFGLNNCSSSNRLDQ). A helical transmembrane segment spans residues 278 to 301 (AMQVTETLGMTHCCINPIIYAFVG). The Cytoplasmic segment spans residues 302 to 352 (EKFRNYLLVFFQKHIAKHFCKCCSIFQQEAPERASSVYTRSTGEQEISVGL). Residues C321, C323, and C324 are each lipidated (S-palmitoyl cysteine). Phosphoserine; by BARK1 occurs at positions 336, 337, 342, and 349.

It belongs to the G-protein coupled receptor 1 family. As to quaternary structure, interacts with PRAF2. Efficient ligand binding to CCL3/MIP-1alpha and CCL4/MIP-1beta requires sulfation, O-glycosylation and sialic acid modifications. Glycosylation on Ser-6 is required for efficient binding of CCL4. Interacts with GRK2. Interacts with ARRB1 and ARRB2. Interacts with CNIH4. Interacts with S100A4; this interaction stimulates T-lymphocyte chemotaxis. Post-translationally, sulfated on at least 2 of the N-terminal tyrosines. Sulfation is required for efficient binding of the chemokines, CCL3 and CCL4. In terms of processing, palmitoylation in the C-terminal is important for cell surface expression. Phosphorylation on serine residues in the C-terminal is stimulated by binding CC chemokines especially by APO-RANTES. Post-translationally, O-glycosylated, but not N-glycosylated. Ser-6 appears to be the major site even if Ser-7 may be also O-glycosylated. Also sialylated glycans present which contribute to chemokine binding. Thr-16 and Ser-17 may also be glycosylated and, if so, with small moieties such as a T-antigen.

Its subcellular location is the cell membrane. Receptor for a number of inflammatory CC-chemokines including CCL3/MIP-1-alpha, CCL4/MIP-1-beta and RANTES and subsequently transduces a signal by increasing the intracellular calcium ion level. May play a role in the control of granulocytic lineage proliferation or differentiation. Participates in T-lymphocyte migration to the infection site by acting as a chemotactic receptor. In Symphalangus syndactylus (Siamang), this protein is C-C chemokine receptor type 5 (CCR5).